Consider the following 526-residue polypeptide: ATP synthase subunit alpha (526 aa).

171–178 lines the ATP pocket; sequence GDRQTGKT.

The protein belongs to the ATPase alpha/beta chains family. In terms of assembly, F-type ATPases have 2 components, CF(1) - the catalytic core - and CF(0) - the membrane proton channel. CF(1) has five subunits: alpha(3), beta(3), gamma(1), delta(1), epsilon(1). CF(0) has four main subunits: a(1), b(1), b'(1) and c(9-12).

It is found in the cell inner membrane. It catalyses the reaction ATP + H2O + 4 H(+)(in) = ADP + phosphate + 5 H(+)(out). Its function is as follows. Produces ATP from ADP in the presence of a proton gradient across the membrane. The alpha chain is a regulatory subunit. The polypeptide is ATP synthase subunit alpha (Chlorobium phaeovibrioides (strain DSM 265 / 1930) (Prosthecochloris vibrioformis (strain DSM 265))).